Consider the following 154-residue polypeptide: Peptidoglycan amidase Tse1 (154 aa).

Residues cysteine 7 and cysteine 148 are joined by a disulfide bond. Residue cysteine 30 is the Nucleophile of the active site. Catalysis depends on histidine 91, which acts as the Proton acceptor.

In terms of assembly, forms a heterotetramer with Tsi1 consisting of two Tse1 dimers and two Tsi1 dimers. Formation of the complex inactivates Tse1 enzymatic activity.

It localises to the host membrane. The protein localises to the secreted. It carries out the reaction Hydrolysis of gamma-D-glutamyl bonds to the L-terminus (position 7) of meso-diaminopimelic acid (meso-A2pm) in 7-(L-Ala-gamma-D-Glu)-meso-A2pm and 7-(L-Ala-gamma-D-Glu)-7-(D-Ala)-meso-A2pm. It is required that the D-terminal amino and carboxy groups of meso-A2pm are unsubstituted.. Its function is as follows. Toxin secreted by the H1 type VI (H1-T6SS) secretion system into the periplasm of recipient cells. Degrades peptidoglycan via amidase activity thereby helping itself to compete with other bacteria. To protect itself, the bacterium synthesizes immunity protein Tsi1 that specifically interacts with and inactivates cognate toxin. This is Peptidoglycan amidase Tse1 from Pseudomonas aeruginosa (strain ATCC 15692 / DSM 22644 / CIP 104116 / JCM 14847 / LMG 12228 / 1C / PRS 101 / PAO1).